A 631-amino-acid chain; its full sequence is Phosphomethylpyrimidine synthase (631 aa).

Substrate-binding positions include asparagine 239, methionine 268, tyrosine 297, histidine 333, 353–355 (SRG), 394–397 (DGLR), and glutamate 433. Histidine 437 serves as a coordination point for Zn(2+). Tyrosine 460 contributes to the substrate binding site. Histidine 501 provides a ligand contact to Zn(2+). [4Fe-4S] cluster contacts are provided by cysteine 581, cysteine 584, and cysteine 589.

The protein belongs to the ThiC family. In terms of assembly, homodimer. Requires [4Fe-4S] cluster as cofactor.

It carries out the reaction 5-amino-1-(5-phospho-beta-D-ribosyl)imidazole + S-adenosyl-L-methionine = 4-amino-2-methyl-5-(phosphooxymethyl)pyrimidine + CO + 5'-deoxyadenosine + formate + L-methionine + 3 H(+). The protein operates within cofactor biosynthesis; thiamine diphosphate biosynthesis. Catalyzes the synthesis of the hydroxymethylpyrimidine phosphate (HMP-P) moiety of thiamine from aminoimidazole ribotide (AIR) in a radical S-adenosyl-L-methionine (SAM)-dependent reaction. This chain is Phosphomethylpyrimidine synthase, found in Salmonella paratyphi C (strain RKS4594).